The following is a 395-amino-acid chain: LIM/homeobox protein Lhx3 (395 aa).

2 LIM zinc-binding domains span residues 28-78 (CAGC…CKDD) and 87-141 (CAAC…CKAD). The segment at residues 154-213 (AKRPRTTITAKQLETLKNAYNNSPKPARHVREQLSSETGLDMRVVQVWFQNRRAKEKRLK) is a DNA-binding region (homeobox). 2 disordered regions span residues 208–304 (KEKR…QDQY) and 363–383 (GPSS…PVSP). Residues 257–278 (DEPSMSEMNHSNGIYNSLNDSS) show a composition bias toward polar residues.

In terms of assembly, interacts with ldb1 and with the N-terminus of rnf12. As to expression, in dorsal regions at neural tube and tailbud stages and in adults predominantly in the pituitary gland and weakly in the eye and brain.

It is found in the nucleus. Its function is as follows. Transcription factor. May be involved in the specification and maintenance of differentiation of distinct neuronal and neuroendocrine tissues. Early marker for the pituitary and pineal lineages, it may be involved in specifying these lineages. The chain is LIM/homeobox protein Lhx3 (lhx3) from Xenopus laevis (African clawed frog).